The sequence spans 97 residues: MLKMNLANLQLFAHKKGGGSTSNGRDSESKRLGAKAADGQTVTGGSILYRQRGTHIYPGANVGRGGDDTLFAKVEGVVRFERKGRDKKQVSVYPIAK.

Positions M1 to F12 are excised as a propeptide. The tract at residues H14–D38 is disordered.

It belongs to the bacterial ribosomal protein bL27 family. In terms of processing, the N-terminus is cleaved by ribosomal processing cysteine protease Prp.

This Streptococcus mutans serotype c (strain ATCC 700610 / UA159) protein is Large ribosomal subunit protein bL27.